We begin with the raw amino-acid sequence, 690 residues long: F-box/LRR-repeat protein 5 (690 aa).

A hemerythrin-like region spans residues 1–159; that stretch reads MAPFPDEVDV…IKKKVIAQHC (159 aa). Residues His-15, His-57, Glu-58, Glu-61, His-80, His-126, and Glu-130 each contribute to the Fe(3+) site. The F-box domain maps to 202-248; the sequence is STGITHLPPEVMLSIFSYLNPQELCRCSQVSTKWSQLAKTGSLWKHL. LRR repeat units lie at residues 340 to 364, 365 to 392, 393 to 418, 478 to 507, 575 to 606, 607 to 634, and 635 to 660; these read SSAV…LDLT, QTDI…DLSG, CEKI…QSGF, VWML…CVME, TTLP…SLSG, CYQI…NLSG, and CLTV…YFYY. [2Fe-2S] cluster contacts are provided by Cys-661, Cys-675, Cys-685, and Cys-686.

Part of a SCF (SKP1-cullin-F-box) protein ligase complex. Interacts with ACO1/IRP1, IREB2/IRP2; the interaction depends on the [2Fe-2S] cluster. Interacts with DCTN1/p150-glued. [2Fe-2S] cluster is required as a cofactor. Polybiquitinated upon iron and oxygen depletion, leading to its degradation by the proteasome. Ubiquitination is regulated by the hemerythrin-like region that acts as an oxygen and iron sensor. Undergoes constitutive ubiquitin-dependent degradation at the steady state by HERC2. As to expression, ubiquitously expressed. Highly expressed in early embryogenesis with expression decreasing as the embryo progresses through development (E11 and E15).

Its subcellular location is the cytoplasm. It localises to the perinuclear region. The protein resides in the nucleus. It participates in protein modification; protein ubiquitination. Its activity is regulated as follows. An iron-sulfur cluster promotes IRP2 polyubiquitination and degradation in response to both iron and oxygen concentrations. In terms of biological role, component of some SCF (SKP1-cullin-F-box) protein ligase complex that plays a central role in iron homeostasis by promoting the ubiquitination and subsequent degradation of IREB2/IRP2. The C-terminal domain of FBXL5 contains a redox-sensitive [2Fe-2S] cluster that, upon oxidation, promotes binding to IRP2 to effect its oxygen-dependent degradation. Under iron deficiency conditions, the N-terminal hemerythrin-like (Hr) region, which contains a diiron metal center, cannot bind iron and undergoes conformational changes that destabilize the FBXL5 protein and cause its ubiquitination and degradation. When intracellular iron levels start rising, the Hr region is stabilized. Additional increases in iron levels facilitate the assembly and incorporation of a redox active [2Fe-2S] cluster in the C-terminal domain. Only when oxygen level is high enough to maintain the cluster in its oxidized state can FBXL5 recruit IRP2 as a substrate for polyubiquination and degradation. Promotes ubiquitination and subsequent degradation of the dynactin complex component DCTN1. Within the nucleus, promotes the ubiquitination of SNAI1; preventing its interaction with DNA and promoting its degradation. Negatively regulates DNA damage response by mediating the ubiquitin-proteasome degradation of the DNA repair protein NABP2. The chain is F-box/LRR-repeat protein 5 (Fbxl5) from Mus musculus (Mouse).